We begin with the raw amino-acid sequence, 137 residues long: MANFKITISDTKGKSMSKELKDSDANPLLGLELGQETDASVVGLNGKLKLTGGSDKSGVPMRNDIHGAARKYVLLSKGVGLQDAEKGQRVRKLMRGNTVSEEIYQINCKFDGELPVEEAPAEDAPESAEEKSEDKKE.

Residues 114-127 (LPVEEAPAEDAPES) are compositionally biased toward acidic residues. The interval 114-137 (LPVEEAPAEDAPESAEEKSEDKKE) is disordered. Residues 128–137 (AEEKSEDKKE) are compositionally biased toward basic and acidic residues.

The protein belongs to the eukaryotic ribosomal protein eS6 family.

This Nitrosopumilus maritimus (strain SCM1) protein is Small ribosomal subunit protein eS6.